A 519-amino-acid chain; its full sequence is Spermidine/putrescine import ATP-binding protein PotA (519 aa).

In terms of domain architecture, ABC transporter spans 6–401 (LHLRDITKIY…PNSLWVANFI (396 aa)). 39–46 (GPSGCGKT) provides a ligand contact to ATP. Positions 107 to 270 (RKPKDNVDQS…EQFENKNITR (164 aa)) are insert.

The protein belongs to the ABC transporter superfamily. Spermidine/putrescine importer (TC 3.A.1.11.1) family. In terms of assembly, the complex is composed of two ATP-binding proteins (PotA), two transmembrane proteins (PotB and PotC) and a solute-binding protein (PotD).

Its subcellular location is the cell membrane. It catalyses the reaction ATP + H2O + polyamine-[polyamine-binding protein]Side 1 = ADP + phosphate + polyamineSide 2 + [polyamine-binding protein]Side 1.. Functionally, part of the ABC transporter complex PotABCD involved in spermidine/putrescine import. Responsible for energy coupling to the transport system. In Ureaplasma parvum serovar 3 (strain ATCC 700970), this protein is Spermidine/putrescine import ATP-binding protein PotA.